The chain runs to 299 residues: Oxaloacetate decarboxylase (299 aa).

Ser57 lines the substrate pocket. Asp95 provides a ligand contact to Mg(2+). Substrate-binding residues include Arg167 and His243.

The protein belongs to the isocitrate lyase/PEP mutase superfamily. Oxaloacetate decarboxylase family. In terms of assembly, homotetramer; dimer of dimers. Mg(2+) serves as cofactor.

The enzyme catalyses oxaloacetate + H(+) = pyruvate + CO2. Its function is as follows. Catalyzes the decarboxylation of oxaloacetate into pyruvate. Seems to play a role in maintaining cellular concentrations of bicarbonate and pyruvate. The sequence is that of Oxaloacetate decarboxylase from Paraburkholderia xenovorans (strain LB400).